The chain runs to 779 residues: Protein zer-1 homolog (779 aa).

A2 is subject to N-acetylalanine. 3 LRR repeats span residues 226–245 (SLVL…IVQL), 246–281 (HKLR…KLTR), and 291–315 (LGNL…KTDE). ARM repeat units follow at residues 440–480 (RSEQ…NFSI), 524–569 (DNDH…NITD), 571–613 (TPDN…NVAE), 615–656 (KELR…HIMF), and 727–769 (PDKY…HCSN).

The protein belongs to the zyg-11 family. Interacts with the ELOC-ELOB/Elongin BC complex. Part of an E3 ubiquitin ligase complex including ZER1, CUL2 and Elongin BC.

In terms of biological role, serves as substrate adapter subunit in the E3 ubiquitin ligase complex ZYG11B-CUL2-Elongin BC. Acts redudantly with ZYG11B to target substrates bearing N-terminal glycine degrons for proteasomal degradation. Involved in the clearance of proteolytic fragments generated by caspase cleavage during apoptosis since N-terminal glycine degrons are strongly enriched at caspase cleavage sites. Also important in the quality control of protein N-myristoylation in which N-terminal glycine degrons are conditionally exposed after a failure of N-myristoylation. The sequence is that of Protein zer-1 homolog from Mus musculus (Mouse).